Consider the following 67-residue polypeptide: ATP synthase protein 8 (67 aa).

The chain crosses the membrane as a helical span at residues 8–24; that stretch reads TWFTTVLSTTITLFILM. An N6-acetyllysine; alternate modification is found at Lys54. An N6-succinyllysine; alternate modification is found at Lys54. Residue Lys57 is modified to N6-acetyllysine.

This sequence belongs to the ATPase protein 8 family. As to quaternary structure, F-type ATPases have 2 components, CF(1) - the catalytic core - and CF(0) - the membrane proton channel. Component of an ATP synthase complex composed of ATP5PB, ATP5MC1, ATP5F1E, ATP5PD, ATP5ME, ATP5PF, ATP5MF, MT-ATP6, MT-ATP8, ATP5F1A, ATP5F1B, ATP5F1D, ATP5F1C, ATP5PO, ATP5MG, ATP5MK and ATP5MJ. Interacts with PRICKLE3.

The protein resides in the mitochondrion membrane. Its function is as follows. Mitochondrial membrane ATP synthase (F(1)F(0) ATP synthase or Complex V) produces ATP from ADP in the presence of a proton gradient across the membrane which is generated by electron transport complexes of the respiratory chain. F-type ATPases consist of two structural domains, F(1) - containing the extramembraneous catalytic core and F(0) - containing the membrane proton channel, linked together by a central stalk and a peripheral stalk. During catalysis, ATP synthesis in the catalytic domain of F(1) is coupled via a rotary mechanism of the central stalk subunits to proton translocation. Part of the complex F(0) domain. Minor subunit located with subunit a in the membrane. The polypeptide is ATP synthase protein 8 (MT-ATP8) (Microtus pennsylvanicus (Meadow vole)).